The following is a 316-amino-acid chain: MSGNDLFPSTIYCIESKIESPRNLYGRFLIEPLAIGQGITVGNTLRRILLGDIEGAAITSVKIPGANNEFSILPGIRESVLEILLNLKEIVFRTKSLDVQKGYLSIQGPCVVKAANLQLPTSIEVVDGGQYIATLSGNANLDMEFVINTGKGYQMADYAIKKNSYISSLPVDAIFMPIHKVNYMVEQDHTSKFLTERVILEIWTNGSISPRDALDIGIKKVIDLFNPLHHCSSEYSTNKNDFSTESKINDILVEELELSVRAYNCLKRAQIHTISDLLAYSQEDLLEIKNFGRRSAEEVIEALEKKLNIYLPKEKY.

The alpha N-terminal domain (alpha-NTD) stretch occupies residues M1–S232. Positions K247–Y316 are alpha C-terminal domain (alpha-CTD).

The protein belongs to the RNA polymerase alpha chain family. In terms of assembly, in plastids the minimal PEP RNA polymerase catalytic core is composed of four subunits: alpha, beta, beta', and beta''. When a (nuclear-encoded) sigma factor is associated with the core the holoenzyme is formed, which can initiate transcription.

The protein resides in the plastid. Its subcellular location is the chloroplast. The enzyme catalyses RNA(n) + a ribonucleoside 5'-triphosphate = RNA(n+1) + diphosphate. DNA-dependent RNA polymerase catalyzes the transcription of DNA into RNA using the four ribonucleoside triphosphates as substrates. The protein is DNA-directed RNA polymerase subunit alpha of Mesostigma viride (Green alga).